The chain runs to 471 residues: Ribosomal protein uS12 methylthiotransferase RimO (471 aa).

An MTTase N-terminal domain is found at 2–122; it reads IKVSLISLGC…VAPIIQEIYA (121 aa). [4Fe-4S] cluster contacts are provided by Cys-11, Cys-47, Cys-84, Cys-166, Cys-170, and Cys-173. In terms of domain architecture, Radical SAM core spans 152 to 395; that stretch reads LTPKHFAYVK…MALQKQIAAD (244 aa). The TRAM domain occupies 398–458; sequence KTYVGRTLRV…DYDLLALPPG (61 aa).

It belongs to the methylthiotransferase family. RimO subfamily. The cofactor is [4Fe-4S] cluster.

The protein localises to the cytoplasm. The catalysed reaction is L-aspartate(89)-[ribosomal protein uS12]-hydrogen + (sulfur carrier)-SH + AH2 + 2 S-adenosyl-L-methionine = 3-methylsulfanyl-L-aspartate(89)-[ribosomal protein uS12]-hydrogen + (sulfur carrier)-H + 5'-deoxyadenosine + L-methionine + A + S-adenosyl-L-homocysteine + 2 H(+). Catalyzes the methylthiolation of an aspartic acid residue of ribosomal protein uS12. This Opitutus terrae (strain DSM 11246 / JCM 15787 / PB90-1) protein is Ribosomal protein uS12 methylthiotransferase RimO.